An 82-amino-acid polypeptide reads, in one-letter code: ATP synthase subunit c, chloroplastic (82 aa).

2 helical membrane-spanning segments follow: residues 3-23 (PIVA…AAIG) and 57-77 (FAFM…LLFA).

It belongs to the ATPase C chain family. In terms of assembly, F-type ATPases have 2 components, F(1) - the catalytic core - and F(0) - the membrane proton channel. F(1) has five subunits: alpha(3), beta(3), gamma(1), delta(1), epsilon(1). F(0) has four main subunits: a(1), b(1), b'(1) and c(10-14). The alpha and beta chains form an alternating ring which encloses part of the gamma chain. F(1) is attached to F(0) by a central stalk formed by the gamma and epsilon chains, while a peripheral stalk is formed by the delta, b and b' chains.

The protein localises to the plastid. Its subcellular location is the chloroplast thylakoid membrane. Its function is as follows. F(1)F(0) ATP synthase produces ATP from ADP in the presence of a proton or sodium gradient. F-type ATPases consist of two structural domains, F(1) containing the extramembraneous catalytic core and F(0) containing the membrane proton channel, linked together by a central stalk and a peripheral stalk. During catalysis, ATP synthesis in the catalytic domain of F(1) is coupled via a rotary mechanism of the central stalk subunits to proton translocation. Functionally, key component of the F(0) channel; it plays a direct role in translocation across the membrane. A homomeric c-ring of between 10-14 subunits forms the central stalk rotor element with the F(1) delta and epsilon subunits. This is ATP synthase subunit c, chloroplastic from Chlorella vulgaris (Green alga).